The chain runs to 145 residues: Putative pre-16S rRNA nuclease (145 aa).

The protein belongs to the YqgF nuclease family.

Its subcellular location is the cytoplasm. Functionally, could be a nuclease involved in processing of the 5'-end of pre-16S rRNA. The sequence is that of Putative pre-16S rRNA nuclease from Tropheryma whipplei (strain Twist) (Whipple's bacillus).